Here is a 60-residue protein sequence, read N- to C-terminus: Large ribosomal subunit protein uL30 (60 aa).

It belongs to the universal ribosomal protein uL30 family. Part of the 50S ribosomal subunit.

The sequence is that of Large ribosomal subunit protein uL30 from Cupriavidus metallidurans (strain ATCC 43123 / DSM 2839 / NBRC 102507 / CH34) (Ralstonia metallidurans).